The sequence spans 237 residues: Phosphoserine phosphatase (237 aa).

The Nucleophile role is filled by Asp-39. Residues Asp-39 and Glu-41 each coordinate Mg(2+). The Proton donor role is filled by Glu-41. Residues Glu-47, Arg-78, 122-123 (SD), and Lys-165 each bind substrate. Asp-184 serves as a coordination point for Mg(2+). Position 187 (Asn-187) interacts with substrate.

This sequence belongs to the thrH family. Mg(2+) is required as a cofactor.

The catalysed reaction is O-phospho-L-serine + H2O = L-serine + phosphate. It catalyses the reaction O-phospho-D-serine + H2O = D-serine + phosphate. Its pathway is amino-acid biosynthesis; L-serine biosynthesis; L-serine from 3-phospho-D-glycerate: step 3/3. Phosphoserine phosphatase that mediates dephosphorylation of phosphoserine in the serine biosynthesis pathway. Also able to dephosphorylate phospho-threonine. This chain is Phosphoserine phosphatase, found in Pseudomonas syringae pv. tomato (strain ATCC BAA-871 / DC3000).